A 412-amino-acid polypeptide reads, in one-letter code: Putative competence-damage inducible protein (412 aa).

This sequence belongs to the CinA family.

In Bacillus anthracis, this protein is Putative competence-damage inducible protein.